Reading from the N-terminus, the 400-residue chain is Acetate kinase (400 aa).

Asn10 serves as a coordination point for Mg(2+). Residue Lys17 coordinates ATP. Arg91 contributes to the substrate binding site. The Proton donor/acceptor role is filled by Asp150. ATP is bound by residues 210-214 (HLGGG), 285-287 (DFR), and 333-337 (GIGEN). Mg(2+) is bound at residue Glu387.

It belongs to the acetokinase family. Homodimer. It depends on Mg(2+) as a cofactor. Mn(2+) serves as cofactor.

It localises to the cytoplasm. It catalyses the reaction acetate + ATP = acetyl phosphate + ADP. It functions in the pathway metabolic intermediate biosynthesis; acetyl-CoA biosynthesis; acetyl-CoA from acetate: step 1/2. Functionally, catalyzes the formation of acetyl phosphate from acetate and ATP. Can also catalyze the reverse reaction. In Buchnera aphidicola subsp. Baizongia pistaciae (strain Bp), this protein is Acetate kinase.